The primary structure comprises 470 residues: Glutamate--tRNA ligase (470 aa).

The 'HIGH' region signature appears at 12–22 (PSPTGIFHVGG). Zn(2+)-binding residues include Cys103, Cys105, Cys125, and Asp127. Residues 236 to 240 (KLSKR) carry the 'KMSKS' region motif. Residue Lys239 participates in ATP binding.

The protein belongs to the class-I aminoacyl-tRNA synthetase family. Glutamate--tRNA ligase type 1 subfamily. Monomer. The cofactor is Zn(2+).

The protein localises to the cytoplasm. It catalyses the reaction tRNA(Glu) + L-glutamate + ATP = L-glutamyl-tRNA(Glu) + AMP + diphosphate. In terms of biological role, catalyzes the attachment of glutamate to tRNA(Glu) in a two-step reaction: glutamate is first activated by ATP to form Glu-AMP and then transferred to the acceptor end of tRNA(Glu). The polypeptide is Glutamate--tRNA ligase (Frankia alni (strain DSM 45986 / CECT 9034 / ACN14a)).